Reading from the N-terminus, the 131-residue chain is Small ribosomal subunit protein uS12 (131 aa).

3-methylthioaspartic acid is present on Asp89.

The protein belongs to the universal ribosomal protein uS12 family. In terms of assembly, part of the 30S ribosomal subunit. Contacts proteins S8 and S17. May interact with IF1 in the 30S initiation complex.

Functionally, with S4 and S5 plays an important role in translational accuracy. In terms of biological role, interacts with and stabilizes bases of the 16S rRNA that are involved in tRNA selection in the A site and with the mRNA backbone. Located at the interface of the 30S and 50S subunits, it traverses the body of the 30S subunit contacting proteins on the other side and probably holding the rRNA structure together. The combined cluster of proteins S8, S12 and S17 appears to hold together the shoulder and platform of the 30S subunit. In Karelsulcia muelleri (strain GWSS) (Sulcia muelleri), this protein is Small ribosomal subunit protein uS12.